Reading from the N-terminus, the 651-residue chain is Transmembrane protein 201 (651 aa).

At 1–209 (MEALNQILIE…KNTYSLSTPA (209 aa)) the chain is on the nuclear side. N124 is a glycosylation site (N-linked (GlcNAc...) asparagine). Residues 210-230 (WLILLRILTFLACAFLVAVAL) traverse the membrane as a helical segment. Over 231 to 296 (SGYVDESPSV…LFWQSGSDHQ (66 aa)) the chain is Perinuclear space. Residue N259 is glycosylated (N-linked (GlcNAc...) asparagine). Residues 297–317 (MAVASVGLLTCITGVLMAGPV) form a helical membrane-spanning segment. At 318-321 (RLRR) the chain is on the nuclear side. The chain crosses the membrane as a helical span at residues 322–342 (IDAVASVLWLLVICFYLAECY). Residues 343–352 (LKTDVPSWLE) lie on the Perinuclear space side of the membrane. The helical transmembrane segment at 353–373 (MVKFGITSVCCLVGFAAAVAT) threads the bilayer. The Nuclear segment spans residues 374–625 (RKSTSQRRAR…PGWKGFLGMT (252 aa)). A glycan (N-linked (GlcNAc...) asparagine) is linked at N421. Residues 469–525 (GSRPSSQCKDSPPSDYYSLKSGSRPSSPGPSPTPSVAGSVTSTSSSARQRRPLISPA) form a disordered region. The span at 502 to 515 (PSVAGSVTSTSSSA) shows a compositional bias: low complexity. The N-linked (GlcNAc...) asparagine glycan is linked to N528. Residues 626-646 (LWPGLLFASLTINLSFICIYV) traverse the membrane as a helical segment. Residues 647-651 (YYNWR) are Perinuclear space-facing.

This sequence belongs to the TMEM201 family.

Its subcellular location is the nucleus inner membrane. Functionally, critical regulator of angiogenesis and endothelial cell (EC) migration. Promotes the migration of endothelial cells, which is essential for angiogenesis. May be involved in actin-dependent nuclear movement. May be involved in the organization of the nuclear envelope. May recruit Ran GTPase to the nuclear periphery. In Danio rerio (Zebrafish), this protein is Transmembrane protein 201 (tmem201).